A 156-amino-acid polypeptide reads, in one-letter code: Ribonuclease pancreatic (156 aa).

Residues 1-28 (MALEKSLVLLPLLVLILLVLGWVQPSLG) form the signal peptide. The segment covering 33–43 (AKKFQRQHVDS) has biased composition (basic and acidic residues). Residues 33-53 (AKKFQRQHVDSDSSPSSSSTY) form a disordered region. Lysine 35 and arginine 38 together coordinate substrate. Histidine 40 serves as the catalytic Proton acceptor. Disulfide bonds link cysteine 54/cysteine 112, cysteine 68/cysteine 123, cysteine 86/cysteine 138, and cysteine 93/cysteine 100. A glycan (N-linked (GlcNAc...) asparagine) is linked at asparagine 62. Residues 69-73 (KPVNT) and lysine 94 contribute to the substrate site. Residue asparagine 104 is glycosylated (N-linked (GlcNAc...) asparagine). Arginine 113 serves as a coordination point for substrate. A glycan (N-linked (GlcNAc...) asparagine) is linked at asparagine 116. Histidine 147 (proton donor) is an active-site residue.

It belongs to the pancreatic ribonuclease family. In terms of assembly, monomer. Interacts with and forms tight 1:1 complexes with RNH1. Dimerization of two such complexes may occur. Interaction with RNH1 inhibits this protein. In terms of tissue distribution, pancreas and other tissues and body fluids (indicating it may have other physiological functions besides its role in digestion).

It localises to the secreted. It catalyses the reaction an [RNA] containing cytidine + H2O = an [RNA]-3'-cytidine-3'-phosphate + a 5'-hydroxy-ribonucleotide-3'-[RNA].. The enzyme catalyses an [RNA] containing uridine + H2O = an [RNA]-3'-uridine-3'-phosphate + a 5'-hydroxy-ribonucleotide-3'-[RNA].. Functionally, endonuclease that catalyzes the cleavage of RNA on the 3' side of pyrimidine nucleotides. Acts on single-stranded and double-stranded RNA. This chain is Ribonuclease pancreatic (RNASE1), found in Pan troglodytes (Chimpanzee).